The sequence spans 635 residues: Chaperone protein DnaK (635 aa).

Threonine 198 is subject to Phosphothreonine; by autocatalysis. Residues 597-635 form a disordered region; that stretch reads LYEQDQANNERHDTPETEKAEGDNVVDAEFQEIDDQDKK. Positions 604-618 are enriched in basic and acidic residues; the sequence is NNERHDTPETEKAEG. A compositionally biased stretch (acidic residues) spans 620–635; that stretch reads NVVDAEFQEIDDQDKK.

Belongs to the heat shock protein 70 family.

In terms of biological role, acts as a chaperone. The polypeptide is Chaperone protein DnaK (Zymomonas mobilis subsp. mobilis (strain ATCC 31821 / ZM4 / CP4)).